The following is a 37-amino-acid chain: Large ribosomal subunit protein bL36 (37 aa).

The protein belongs to the bacterial ribosomal protein bL36 family.

The sequence is that of Large ribosomal subunit protein bL36 from Endomicrobium trichonymphae.